Consider the following 202-residue polypeptide: MKYPLILASSSLFRQSLLQKFNLPFDTFSPNVDESALNNETPAQLVKRLSELKARAASKHFSKGLVIGSDQVAVFNEQILGKPHNKHNAVKQLSLFSGHSVTFLTGLCVYDLTSGESKTCIEPFNVTFKTLTDAQISAYCDAEQPYNCAGSFKSEGLGICLFEKLTGDDPNSLIGLPLIKLSQLLAEFGLDVLSAQSNTPLS.

Asp-70 serves as the catalytic Proton acceptor.

It belongs to the Maf family. YceF subfamily. A divalent metal cation is required as a cofactor.

The protein resides in the cytoplasm. It carries out the reaction N(7)-methyl-GTP + H2O = N(7)-methyl-GMP + diphosphate + H(+). Nucleoside triphosphate pyrophosphatase that hydrolyzes 7-methyl-GTP (m(7)GTP). May have a dual role in cell division arrest and in preventing the incorporation of modified nucleotides into cellular nucleic acids. This is 7-methyl-GTP pyrophosphatase from Pseudoalteromonas translucida (strain TAC 125).